A 514-amino-acid polypeptide reads, in one-letter code: Flagellin B (514 aa).

It belongs to the bacterial flagellin family. In terms of assembly, heteromer of FlaA and FlaB. FlaB is located proximal to the hook while the remainder of the filament is composed of the predominant FlaA.

The protein resides in the secreted. Its subcellular location is the bacterial flagellum. Functionally, flagellin is the subunit protein which polymerizes to form the filaments of bacterial flagella. Important for motility and virulence. The chain is Flagellin B (flaB) from Helicobacter pylori (strain ATCC 700392 / 26695) (Campylobacter pylori).